The primary structure comprises 515 residues: Maturase K (515 aa).

Belongs to the intron maturase 2 family. MatK subfamily.

It is found in the plastid. It localises to the chloroplast. Usually encoded in the trnK tRNA gene intron. Probably assists in splicing its own and other chloroplast group II introns. The polypeptide is Maturase K (Trillium luteum (Yellow wakerobin)).